We begin with the raw amino-acid sequence, 333 residues long: Fructose-1,6-bisphosphatase class 1 (333 aa).

Mg(2+) contacts are provided by E90, D112, L114, and D115. Substrate contacts are provided by residues 115-118 (DGSS), N207, and K273. E279 serves as a coordination point for Mg(2+).

The protein belongs to the FBPase class 1 family. Homotetramer. Mg(2+) serves as cofactor.

The protein resides in the cytoplasm. The enzyme catalyses beta-D-fructose 1,6-bisphosphate + H2O = beta-D-fructose 6-phosphate + phosphate. Its pathway is carbohydrate biosynthesis; gluconeogenesis. This Aromatoleum aromaticum (strain DSM 19018 / LMG 30748 / EbN1) (Azoarcus sp. (strain EbN1)) protein is Fructose-1,6-bisphosphatase class 1.